The sequence spans 377 residues: Anhydro-N-acetylmuramic acid kinase (377 aa).

Residue 18 to 25 (GTSADGID) participates in ATP binding.

The protein belongs to the anhydro-N-acetylmuramic acid kinase family.

The enzyme catalyses 1,6-anhydro-N-acetyl-beta-muramate + ATP + H2O = N-acetyl-D-muramate 6-phosphate + ADP + H(+). The protein operates within amino-sugar metabolism; 1,6-anhydro-N-acetylmuramate degradation. It participates in cell wall biogenesis; peptidoglycan recycling. Functionally, catalyzes the specific phosphorylation of 1,6-anhydro-N-acetylmuramic acid (anhMurNAc) with the simultaneous cleavage of the 1,6-anhydro ring, generating MurNAc-6-P. Is required for the utilization of anhMurNAc either imported from the medium or derived from its own cell wall murein, and thus plays a role in cell wall recycling. The polypeptide is Anhydro-N-acetylmuramic acid kinase (Xanthomonas oryzae pv. oryzae (strain MAFF 311018)).